Here is a 684-residue protein sequence, read N- to C-terminus: Glycine--tRNA ligase beta subunit (684 aa).

This sequence belongs to the class-II aminoacyl-tRNA synthetase family. Tetramer of two alpha and two beta subunits.

Its subcellular location is the cytoplasm. It catalyses the reaction tRNA(Gly) + glycine + ATP = glycyl-tRNA(Gly) + AMP + diphosphate. The chain is Glycine--tRNA ligase beta subunit from Pseudomonas syringae pv. syringae (strain B728a).